Reading from the N-terminus, the 387-residue chain is Patatin-12 (387 aa).

The N-terminal stretch at 1–23 is a signal peptide; the sequence is MATTKSFLILIVMILATTSSTFA. Residues 32–230 form the PNPLA domain; the sequence is LSIDGGGIKG…TVGDPALLSL (199 aa). The GXGXXG motif lies at 36-41; it reads GGGIKG. The GXSXG motif lies at 75–79; it reads GTSTG. S77 serves as the catalytic Nucleophile. N-linked (GlcNAc...) asparagine glycosylation occurs at N115. D216 (proton acceptor) is an active-site residue. The DGA/G motif lies at 216–218; sequence DGG. Residues 322 to 385 adopt a coiled-coil conformation; the sequence is ENALTGTTTE…DRKKLRANKA (64 aa).

The protein belongs to the patatin family. As to expression, tuber.

Its subcellular location is the vacuole. In terms of biological role, probable lipolytic acyl hydrolase (LAH), an activity which is thought to be involved in the response of tubers to pathogens. The chain is Patatin-12 from Solanum tuberosum (Potato).